We begin with the raw amino-acid sequence, 843 residues long: Protein P (843 aa).

The terminal protein domain (TP) stretch occupies residues 1 to 177 (MPLSYQHFRK…FCGSPYSWEQ (177 aa)). Residues 178 to 346 (ELQHGRLFFK…YCLSHIVNLL (169 aa)) form a spacer region. The interval 248-272 (HPTTRQSFGVEPSGSGHIDNSASNS) is disordered. Positions 347 to 690 (EDWGPCTENG…YLNLYPVARQ (344 aa)) are polymerase/reverse transcriptase domain (RT). The Reverse transcriptase domain maps to 357-600 (EHNIRIPRTP…YSLNFMGYVI (244 aa)). The Mg(2+) site is built by D429, D551, and D552.

The protein belongs to the hepadnaviridae P protein family.

The enzyme catalyses DNA(n) + a 2'-deoxyribonucleoside 5'-triphosphate = DNA(n+1) + diphosphate. The catalysed reaction is Endonucleolytic cleavage to 5'-phosphomonoester.. Activated by host HSP70 and HSP40 in vitro to be able to bind the epsilon loop of the pgRNA. Because deletion of the RNase H region renders the protein partly chaperone-independent, the chaperones may be needed indirectly to relieve occlusion of the RNA-binding site by this domain. Inhibited by several reverse-transcriptase inhibitors: Lamivudine, Adefovir and Entecavir. Its function is as follows. Multifunctional enzyme that converts the viral RNA genome into dsDNA in viral cytoplasmic capsids. This enzyme displays a DNA polymerase activity that can copy either DNA or RNA templates, and a ribonuclease H (RNase H) activity that cleaves the RNA strand of RNA-DNA heteroduplexes in a partially processive 3'- to 5'-endonucleasic mode. Neo-synthesized pregenomic RNA (pgRNA) are encapsidated together with the P protein, and reverse-transcribed inside the nucleocapsid. Initiation of reverse-transcription occurs first by binding the epsilon loop on the pgRNA genome, and is initiated by protein priming, thereby the 5'-end of (-)DNA is covalently linked to P protein. Partial (+)DNA is synthesized from the (-)DNA template and generates the relaxed circular DNA (RC-DNA) genome. After budding and infection, the RC-DNA migrates in the nucleus, and is converted into a plasmid-like covalently closed circular DNA (cccDNA). The activity of P protein does not seem to be necessary for cccDNA generation, and is presumably released from (+)DNA by host nuclear DNA repair machinery. This chain is Protein P, found in Homo sapiens (Human).